Reading from the N-terminus, the 378-residue chain is MAKRDYYEVLGVAKNAGDDEIKKAYRKLAMKYHPDRNPDNKDAEEHFKEVKEAYEMLSDGQKRAAYDQYGHAGVDPNMGGAGAQGFGGFADAFGDIFGDIFGQAAGGAARGGRGGPQVYRGADLRYSMEITLEQAAHGYDTQIRVPSWVSCEVCHGSGAKPGTKPETCPTCHGQGTVRMSQGFFSIQQTCPKCHGTGTYIPEPCVHCHGSGKVKETKTLEVKIPAGIDDGMRIRSAGNGEPGINGGPPGDLYVEIHIKPHSVFERDGDDLHCQMPIPFTTAALGGEIEVPTLAGRASFPVPEGTQSGKTFRLRGKGIKGLRSSIAGDLYVHVQVETPVKLTDNQRDLLKQFEKSLAEGGARHSPQSKSWFDRVKSFFE.

The J domain maps to 5-70; sequence DYYEVLGVAK…QKRAAYDQYG (66 aa). The CR-type zinc finger occupies 138-216; that stretch reads GYDTQIRVPS…CHGSGKVKET (79 aa). Zn(2+) contacts are provided by Cys-151, Cys-154, Cys-168, Cys-171, Cys-190, Cys-193, Cys-204, and Cys-207. CXXCXGXG motif repeat units follow at residues 151 to 158, 168 to 175, 190 to 197, and 204 to 211; these read CEVCHGSG, CPTCHGQG, CPKCHGTG, and CVHCHGSG.

This sequence belongs to the DnaJ family. As to quaternary structure, homodimer. The cofactor is Zn(2+).

The protein resides in the cytoplasm. Functionally, participates actively in the response to hyperosmotic and heat shock by preventing the aggregation of stress-denatured proteins and by disaggregating proteins, also in an autonomous, DnaK-independent fashion. Unfolded proteins bind initially to DnaJ; upon interaction with the DnaJ-bound protein, DnaK hydrolyzes its bound ATP, resulting in the formation of a stable complex. GrpE releases ADP from DnaK; ATP binding to DnaK triggers the release of the substrate protein, thus completing the reaction cycle. Several rounds of ATP-dependent interactions between DnaJ, DnaK and GrpE are required for fully efficient folding. Also involved, together with DnaK and GrpE, in the DNA replication of plasmids through activation of initiation proteins. The chain is Chaperone protein DnaJ from Burkholderia lata (strain ATCC 17760 / DSM 23089 / LMG 22485 / NCIMB 9086 / R18194 / 383).